We begin with the raw amino-acid sequence, 78 residues long: Large ribosomal subunit protein bL28 (78 aa).

It belongs to the bacterial ribosomal protein bL28 family.

In Histophilus somni (strain 129Pt) (Haemophilus somnus), this protein is Large ribosomal subunit protein bL28.